The primary structure comprises 289 residues: Phosphatidylglycerol--prolipoprotein diacylglyceryl transferase (289 aa).

A run of 3 helical transmembrane segments spans residues 13–33 (LGPL…LLGW), 61–81 (FILW…VLFY), and 99–119 (GGMS…LFAM). Residue arginine 144 participates in a 1,2-diacyl-sn-glycero-3-phospho-(1'-sn-glycerol) binding. 2 helical membrane passes run 218–238 (GVVM…LENV) and 250–270 (LGLT…LWLI).

Belongs to the Lgt family.

The protein localises to the cell inner membrane. The enzyme catalyses L-cysteinyl-[prolipoprotein] + a 1,2-diacyl-sn-glycero-3-phospho-(1'-sn-glycerol) = an S-1,2-diacyl-sn-glyceryl-L-cysteinyl-[prolipoprotein] + sn-glycerol 1-phosphate + H(+). Its pathway is protein modification; lipoprotein biosynthesis (diacylglyceryl transfer). Functionally, catalyzes the transfer of the diacylglyceryl group from phosphatidylglycerol to the sulfhydryl group of the N-terminal cysteine of a prolipoprotein, the first step in the formation of mature lipoproteins. The polypeptide is Phosphatidylglycerol--prolipoprotein diacylglyceryl transferase (Phenylobacterium zucineum (strain HLK1)).